The sequence spans 152 residues: Regulatory protein RecX (152 aa).

Belongs to the RecX family.

The protein resides in the cytoplasm. In terms of biological role, modulates RecA activity. The polypeptide is Regulatory protein RecX (Chromohalobacter salexigens (strain ATCC BAA-138 / DSM 3043 / CIP 106854 / NCIMB 13768 / 1H11)).